Consider the following 424-residue polypeptide: Caspase-2 (424 aa).

Residues Met-1–Asp-140 constitute a propeptide that is removed on maturation. Positions Met-7 to Thr-96 constitute a CARD domain. Active-site residues include His-248 and Cys-291. Positions Thr-296–Asp-310 are enriched in basic and acidic residues. A disordered region spans residues Thr-296 to Leu-325.

The protein belongs to the peptidase C14A family. Heterotetramer that consists of two anti-parallel arranged heterodimers, each one formed by a p18 subunit and a p12 subunit.

It catalyses the reaction Strict requirement for an Asp residue at P1, with 316-Asp being essential for proteolytic activity and has a preferred cleavage sequence of Val-Asp-Val-Ala-Asp-|-.. Involved in the activation cascade of caspases responsible for apoptosis execution. Might function by either activating some proteins required for cell death or inactivating proteins necessary for cell survival. The chain is Caspase-2 (CASP2) from Gallus gallus (Chicken).